The primary structure comprises 276 residues: Elongation factor Ts, mitochondrial (276 aa).

The protein belongs to the EF-Ts family.

The protein localises to the mitochondrion. Associates with the EF-Tu.GDP complex and induces the exchange of GDP to GTP. It remains bound to the aminoacyl-tRNA.EF-Tu.GTP complex up to the GTP hydrolysis stage on the ribosome. This is Elongation factor Ts, mitochondrial from Leishmania major.